A 191-amino-acid chain; its full sequence is Fe/S biogenesis protein NfuA (191 aa).

[4Fe-4S] cluster is bound by residues Cys149 and Cys152.

The protein belongs to the NfuA family. In terms of assembly, homodimer. The cofactor is [4Fe-4S] cluster.

Involved in iron-sulfur cluster biogenesis. Binds a 4Fe-4S cluster, can transfer this cluster to apoproteins, and thereby intervenes in the maturation of Fe/S proteins. Could also act as a scaffold/chaperone for damaged Fe/S proteins. This Edwardsiella ictaluri (strain 93-146) protein is Fe/S biogenesis protein NfuA.